Reading from the N-terminus, the 385-residue chain is tRNA-specific 2-thiouridylase MnmA (385 aa).

Residues 12-19 and methionine 38 each bind ATP; that span reads GLSGGVDS. The interval 108 to 110 is interaction with target base in tRNA; sequence NPD. Residue cysteine 113 is the Nucleophile of the active site. Residues cysteine 113 and cysteine 210 are joined by a disulfide bond. Glycine 138 is a binding site for ATP. The interaction with tRNA stretch occupies residues 160 to 162; it reads KDQ. Residue cysteine 210 is the Cysteine persulfide intermediate of the active site.

Belongs to the MnmA/TRMU family.

It localises to the cytoplasm. It carries out the reaction S-sulfanyl-L-cysteinyl-[protein] + uridine(34) in tRNA + AH2 + ATP = 2-thiouridine(34) in tRNA + L-cysteinyl-[protein] + A + AMP + diphosphate + H(+). In terms of biological role, catalyzes the 2-thiolation of uridine at the wobble position (U34) of tRNA, leading to the formation of s(2)U34. The sequence is that of tRNA-specific 2-thiouridylase MnmA from Ureaplasma parvum serovar 3 (strain ATCC 27815 / 27 / NCTC 11736).